The sequence spans 264 residues: MPTGKLRQKPPYAAIMTNSPVTPSTETQQPKRYARFLPQEADAPPVEWLIAEGLTDYEEALAFMEARVQAIREGTASELVWLVEHPPLYTAGTSANAEDLLTPDRFPVFNTGRGGEYTYHGPGQRVAYVMLDLKRRREDVRAFVASLEQWIIETLAAFNIKGERREDRVGVWVVRPEKPRLADGSMCEDKIAAIGIRLRRWVSFHGIAINVEPDLSHYGGIVPCGISEHGVTSLVDLGLPVTMGDVDVALGKAFESVFGPRQTK.

One can recognise a BPL/LPL catalytic domain in the interval 74–262 (GTASELVWLV…AFESVFGPRQ (189 aa)). Residues 113–120 (RGGEYTYH), 193–195 (AIG), and 206–208 (GIA) each bind substrate. C224 functions as the Acyl-thioester intermediate in the catalytic mechanism.

Belongs to the LipB family.

It localises to the cytoplasm. The catalysed reaction is octanoyl-[ACP] + L-lysyl-[protein] = N(6)-octanoyl-L-lysyl-[protein] + holo-[ACP] + H(+). The protein operates within protein modification; protein lipoylation via endogenous pathway; protein N(6)-(lipoyl)lysine from octanoyl-[acyl-carrier-protein]: step 1/2. Catalyzes the transfer of endogenously produced octanoic acid from octanoyl-acyl-carrier-protein onto the lipoyl domains of lipoate-dependent enzymes. Lipoyl-ACP can also act as a substrate although octanoyl-ACP is likely to be the physiological substrate. This is Octanoyltransferase from Brucella melitensis biotype 1 (strain ATCC 23456 / CCUG 17765 / NCTC 10094 / 16M).